The chain runs to 257 residues: Galactitol 2-dehydrogenase (257 aa).

Residues 21–23, 67–68, asparagine 94, tyrosine 162, and lysine 166 contribute to the NAD(+) site; these read RAI and DV. Catalysis depends on tyrosine 162, which acts as the Proton acceptor.

The protein belongs to the short-chain dehydrogenases/reductases (SDR) family. In terms of assembly, homotetramer. Requires Mg(2+) as cofactor.

It carries out the reaction galactitol + NAD(+) = keto-D-tagatose + NADH + H(+). Catalyzes the oxidation of galactitol to D-tagatose. Also catalyzes the oxidation of a wide range of substrates, including polyvalent aliphatic alcohols and polyols, to the corresponding ketones and ketoses. Galactitol is the preferred substrate. This chain is Galactitol 2-dehydrogenase, found in Rhizobium johnstonii (strain DSM 114642 / LMG 32736 / 3841) (Rhizobium leguminosarum bv. viciae).